The chain runs to 177 residues: ATP synthase subunit delta (177 aa).

It belongs to the ATPase delta chain family. F-type ATPases have 2 components, F(1) - the catalytic core - and F(0) - the membrane proton channel. F(1) has five subunits: alpha(3), beta(3), gamma(1), delta(1), epsilon(1). F(0) has three main subunits: a(1), b(2) and c(10-14). The alpha and beta chains form an alternating ring which encloses part of the gamma chain. F(1) is attached to F(0) by a central stalk formed by the gamma and epsilon chains, while a peripheral stalk is formed by the delta and b chains.

The protein resides in the cell inner membrane. Its function is as follows. F(1)F(0) ATP synthase produces ATP from ADP in the presence of a proton or sodium gradient. F-type ATPases consist of two structural domains, F(1) containing the extramembraneous catalytic core and F(0) containing the membrane proton channel, linked together by a central stalk and a peripheral stalk. During catalysis, ATP synthesis in the catalytic domain of F(1) is coupled via a rotary mechanism of the central stalk subunits to proton translocation. This protein is part of the stalk that links CF(0) to CF(1). It either transmits conformational changes from CF(0) to CF(1) or is implicated in proton conduction. This Shigella dysenteriae serotype 1 (strain Sd197) protein is ATP synthase subunit delta.